The following is a 920-amino-acid chain: MGEVAGGAAPGPPRSGLVSIIIGAEDEDFENELEANSEDQNSQFQSLEQVKRRPAHLMALLQHVALQFEPGPLLCCLHADMLSSLGPKEAKKAFLDFYHSFLEKTAVLRVPVPPSVAFELDRTRPDLISEDVQRRFIQEVVQSQQAAVSRQLEDFRSKRLMGMTPWEQELSLLEPWIGKDRGNYEARERHVAERLLSHLEETQHTISTDEEKSAAVVTAISLYMRHLGVRTKSGDKKSGRNFFRKKVMGNRRSDEPPKTKKGLSSILDPARWNRGEPSAPDCRHLKVEADAEKPGPADRKGGLGMSSRDRTVGTPGQDNPGVSLHPLSTDSVDSREPGVDTPQEPGDTPPQGPTSLEPLAPPESTEDNGETESPEPGDDGEPGRSGLELEPEEPPGWRELVPPDTLLSLPKSQVKRQEVISELLVTEAAHVRMLRVLHDLFYQPMADGGFFPLDELQNIFPSLDELIEVHSLFLDRLMKRRQESGYLIEEIGDVLLARFDGAEGSWFQKISSRFCSRQSFALEQLKAKQRKEPRFCAFVQEAESRPRCRRLQLKDMIPTEMQRLTKYPLLLQSIGQNTEESTERGKVELAAECCREILHHVNQAVRDMEDLLRLKDYQRRLDLTHLRQSSDPMLSEFKNLDITKKKLVHEGPLTWRVTKDKAIEVHVLLLDDLLLLLQRQDERLLLKSHSRTLTPTPDGKTMLRPVLRLTSAMTREVATDHKAFYVIFTWDQEAQIYELVAQTSSERKNWCNLITETAGSLKVPAPASRLKPRPSPSSIREPLLSSSENGTGGAEMAPADARTERLLNDLLPFCRPGPEGQLAATALQKVLSLKQILLSTEEDSGAGPPRDGDGVPGGRAPGPVHTQEIEENLLSLEVAIRQLEELEEEFCRLRPLLSQLGGTLSPNLAAPERSAQTGLS.

Residues 39–230 form the RGSL domain; it reads DQNSQFQSLE…SLYMRHLGVR (192 aa). The disordered stretch occupies residues 231–404; it reads TKSGDKKSGR…PGWRELVPPD (174 aa). The span at 281–311 shows a compositional bias: basic and acidic residues; that stretch reads DCRHLKVEADAEKPGPADRKGGLGMSSRDRT. The segment covering 364 to 380 has biased composition (acidic residues); that stretch reads STEDNGETESPEPGDDG. Residues Ser373, Gly386, Glu390, Ser408, and Ser412 each carry the phosphoserine modification. Positions 415-604 constitute a DH domain; it reads KRQEVISELL…REILHHVNQA (190 aa). Phosphothreonine occurs at positions 432 and 694. In terms of domain architecture, PH spans 646-759; the sequence is KLVHEGPLTW…WCNLITETAG (114 aa). A Phosphotyrosine; by JAK2 modification is found at Tyr737. Disordered regions lie at residues 764–797 and 840–864; these read PAPA…AEMA and TEED…PGPV. The stretch at 865–894 forms a coiled coil; the sequence is HTQEIEENLLSLEVAIRQLEELEEEFCRLR. A Phosphoserine modification is found at Ser905.

As to quaternary structure, interacts with RHOA, GNA12 and GNA13. Homooligomerizes through the coiled coil region. Interacts with CTNNAL1. May interact with CCPG1. Post-translationally, phosphorylated by PKCA. Angiotensin-2 induced Tyr-737 phosphorylation is mediated by JAK2. Isoform 5 is phosphorylated at 'Ser-390'. In terms of tissue distribution, ubiquitously expressed.

It is found in the cytoplasm. The protein localises to the membrane. In terms of biological role, seems to play a role in the regulation of RhoA GTPase by guanine nucleotide-binding alpha-12 (GNA12) and alpha-13 (GNA13) subunits. Acts as a GTPase-activating protein (GAP) for GNA12 and GNA13, and as guanine nucleotide exchange factor (GEF) for RhoA GTPase. Activated G alpha 13/GNA13 stimulates the RhoGEF activity through interaction with the RGS-like domain. This GEF activity is inhibited by binding to activated GNA12. Mediates angiotensin-2-induced RhoA activation. Isoform 3 and isoform 4 do not homooligomerize and show an enhanced RhoGEF activity. In lymphoid follicles, may trigger activation of GNA13 as part of S1PR2-dependent signaling pathway that leads to inhibition of germinal center (GC) B cell growth and migration outside the GC niche. This is Rho guanine nucleotide exchange factor 1 (Arhgef1) from Mus musculus (Mouse).